A 443-amino-acid chain; its full sequence is MDWQTLLTRERLGKPVHSNDELGRSAFHKDHDRIIFSGAFRRLGRKTQVHPVSSNDHIHTRLTHSLEVACVGRSLGMRVGEILREELPEWCDPSDLGVIVQSACLAHDIGNPPFGHSGEDAIRNWFQQAAGRGWLDEMSDAERSDFLHFEGNAQGFRVLTQLEYHQFDGGTRLTYATLGTYLKYPWTSRHAEALGYKKHKFGCYQSELPLLEQITHKLGMPQLDDERWARHPLVYLMEAADDICYGLIDLEDGLEMELLEYSEVEALLLGLVGDDLPDTYRQLGPRDSRRRKLAILRGKAIEHLTNAAARAFVDQQQALLAGQLAGDLVEHMHGPAKLCVQRAKAIAREKIFQDKRKTLHEIGAYTTLEILLNAFCGAALEQYGGHTPSFKNRRILDLLGRNAPDPQWPLYRAFLQVIDFIAGMTDSYATEMAREMTGRSSPS.

The region spanning 61–246 (RLTHSLEVAC…MEAADDICYG (186 aa)) is the HD domain.

Belongs to the dGTPase family. Type 3 subfamily.

This chain is Deoxyguanosinetriphosphate triphosphohydrolase-like protein, found in Pseudomonas aeruginosa (strain LESB58).